Consider the following 725-residue polypeptide: MSASDLTSVQAGAPQGRRQILVTSALPYANGQIHIGHLVEYIQTDIWVRTMRMHGHEIYYIGADDTHGTPVMLRAEQEGVSPKQLIERVWREHKRDFDSFGVSFDNFYTTDSDENRVLSETIYLALKEAGFIAEREIEQAYDPVRQMFLPDRFIKGECPKCHAKDQYGDSCEVCGTTYQPTDLIHPYSVVSGAAPVRKTSTHYFFRLSDPRCEAFLREWVSGLAQPEATNKMREWLGEAGEAKLADWDISRDAPYFGFEIPGAPGKYFYVWLDAPVGYYASFKNLCERRGLDFDAWIRKDSTTEQYHFIGKDILYFHTLFWPAMLEFSGHRTPTNVFAHGFLTVDGAKMSKSRGTFITAQSYIDTGLNPEWLRYYFAAKLNATMEDIDLNLEDFQARVNSDLVGKYVNIASRAAGFLLKRFDGRVQASAMNHPLLATLRGAIPQIAAHYEAREYGRALRQTMELADAVNGYVDSAKPWELAKDPANAVALHETCSVSLEAFRLLSLALKPVLPRVAQGVEAFLGIAPLTWADAGTPLSPEQPVRAYQHLMTRVDPKQIDALLAANRGSLQGTAAAAEAGAANGNGAGSKNGKGAKAAAQPAASAANADDGASPIISIDDFAKIDLRIAKIVACQAVEGSDKLLQLTLDVGEERTRNVFSGIKSAYRPEQLVGKLTVMVANLAPRKMKFGLSEGMVLAASAADEKAEPGLYILEPHSGAKPGMRVK.

The 'HIGH' region signature appears at 27–37 (PYANGQIHIGH). Zn(2+) contacts are provided by cysteine 158, cysteine 161, cysteine 171, and cysteine 174. The 'KMSKS' region motif lies at 348-352 (KMSKS). Lysine 351 serves as a coordination point for ATP. Residues 619–725 (DFAKIDLRIA…SGAKPGMRVK (107 aa)) enclose the tRNA-binding domain.

This sequence belongs to the class-I aminoacyl-tRNA synthetase family. MetG type 1 subfamily. Homodimer. It depends on Zn(2+) as a cofactor.

The protein localises to the cytoplasm. The catalysed reaction is tRNA(Met) + L-methionine + ATP = L-methionyl-tRNA(Met) + AMP + diphosphate. Functionally, is required not only for elongation of protein synthesis but also for the initiation of all mRNA translation through initiator tRNA(fMet) aminoacylation. This Burkholderia pseudomallei (strain 1710b) protein is Methionine--tRNA ligase.